We begin with the raw amino-acid sequence, 469 residues long: MAIYITNTETGKKEELKTIEPGVVKMYVCGPTVYNYIHIGNARPAVVFDAFRRFLEYRGYKVIMVQNFTDIDDKIINEANEWGVDFKDVADTFIAEYWKDAQSLGIRAANFHPRTTDYVNEIVDAVEKLISKGYAYTVENGDVYFSVKKFERYGKLSGKKIEDLISGARVEVNTLKKDPLDFALWKAVKPGEPSWDSPWGCGRPGWHIECSVMSQKLLGDTFDIHAGGEDLIFPHHEDEKSQSEALTGKPFARYWMHNGMIITRGDKMSKSIGNVFLVREAVKRYGKDAVKLFLLSKHYRTPIEFSDEIMMENKKAALKVLKTLNRFEEKYPYPKVPKRDEYMNDIEQKFVEALEDDFNTPKAIALIFDLSKELNKAMDEGKDDEALKRYHLITRVFGSILGLFEGGVKISEGENTNKVIEEILKVRQEFRKAKNFEAADKIRDALLNSNVKILDTPDGTKWEILEVEE.

Cysteine 29 contacts Zn(2+). The 'HIGH' region signature appears at 31 to 41; that stretch reads PTVYNYIHIGN. Zn(2+) is bound by residues cysteine 210, histidine 235, and glutamate 239. The 'KMSKS' region motif lies at 267 to 271; it reads KMSKS. Lysine 270 contacts ATP.

This sequence belongs to the class-I aminoacyl-tRNA synthetase family. Monomer. Zn(2+) serves as cofactor.

Its subcellular location is the cytoplasm. The catalysed reaction is tRNA(Cys) + L-cysteine + ATP = L-cysteinyl-tRNA(Cys) + AMP + diphosphate. This is Cysteine--tRNA ligase from Thermosipho africanus (strain TCF52B).